A 309-amino-acid polypeptide reads, in one-letter code: Probable cell wall protein PGA50 (309 aa).

A signal peptide spans methionine 1–alanine 17. 5 N-linked (GlcNAc...) asparagine glycosylation sites follow: asparagine 67, asparagine 115, asparagine 248, asparagine 267, and asparagine 277. The interval serine 241–isoleucine 281 is disordered. Serine 286 carries GPI-anchor amidated serine lipidation. A propeptide spans threonine 287–cysteine 309 (removed in mature form).

Belongs to the IHD1 family. In terms of processing, the GPI-anchor is attached to the protein in the endoplasmic reticulum and serves to target the protein to the cell surface. There, the glucosamine-inositol phospholipid moiety is cleaved off and the GPI-modified mannoprotein is covalently attached via its lipidless GPI glycan remnant to the 1,6-beta-glucan of the outer cell wall layer.

It is found in the secreted. The protein resides in the cell wall. Its subcellular location is the membrane. Its function is as follows. Probable GPI-anchored cell wall protein that may be involved in cell wall organization, hyphal growth, as well as in virulence. This Candida albicans (strain SC5314 / ATCC MYA-2876) (Yeast) protein is Probable cell wall protein PGA50 (PGA50).